The primary structure comprises 672 residues: tRNA 5-methylaminomethyl-2-thiouridine biosynthesis bifunctional protein MnmC (672 aa).

The interval 1–241 (MHKVQFADVH…KRECLQGVKA (241 aa)) is tRNA (mnm(5)s(2)U34)-methyltransferase. Positions 269–672 (IGGGIASVFS…LLKGSQVKQG (404 aa)) are FAD-dependent cmnm(5)s(2)U34 oxidoreductase.

This sequence in the N-terminal section; belongs to the methyltransferase superfamily. tRNA (mnm(5)s(2)U34)-methyltransferase family. The protein in the C-terminal section; belongs to the DAO family. FAD is required as a cofactor.

It is found in the cytoplasm. The catalysed reaction is 5-aminomethyl-2-thiouridine(34) in tRNA + S-adenosyl-L-methionine = 5-methylaminomethyl-2-thiouridine(34) in tRNA + S-adenosyl-L-homocysteine + H(+). In terms of biological role, catalyzes the last two steps in the biosynthesis of 5-methylaminomethyl-2-thiouridine (mnm(5)s(2)U) at the wobble position (U34) in tRNA. Catalyzes the FAD-dependent demodification of cmnm(5)s(2)U34 to nm(5)s(2)U34, followed by the transfer of a methyl group from S-adenosyl-L-methionine to nm(5)s(2)U34, to form mnm(5)s(2)U34. The sequence is that of tRNA 5-methylaminomethyl-2-thiouridine biosynthesis bifunctional protein MnmC from Pasteurella multocida (strain Pm70).